The chain runs to 87 residues: Omega-lycotoxin-Am1a (87 aa).

Residues 1-17 form the signal peptide; the sequence is MKLSIFFVLFFIAIAYC. A propeptide spanning residues 18-40 is cleaved from the precursor; sequence QPEFLDDEEDEVEETLPVAEEGR. 4 disulfides stabilise this stretch: C44–C59, C51–C64, C58–C84, and C66–C82.

This sequence belongs to the neurotoxin omega-lctx family. As to expression, expressed by the venom gland.

The protein resides in the secreted. Modulates Cav2.1/CACNA1A voltage-gated calcium channels (P/Q-type currents) in rat cerebellar Purkinje cells and hippocampal CA1-CA3 neurons. At saturating concentrations (&gt;10 nM) decelerates activation kinetics and slightly increases peak amplitude without affecting deactivation kinetics. In vivo, does not cause death when intravenously injected into mice. In rat models, through its activity on Cav2.1/CACNA1A, has an ameliorative effect on memory defects provoked by hyperstimulation of N-methyl-D-aspartate receptors (NMDARs) in the hippocampus. The polypeptide is Omega-lycotoxin-Am1a (Alopecosa marikovskyi (Wolf spider)).